Consider the following 75-residue polypeptide: Gas vesicle protein S (75 aa).

The protein belongs to the gas vesicle GvpA family.

The protein resides in the gas vesicle. Functionally, probably a minor component of the gas vesicle. Gas vesicles are hollow, gas filled proteinaceous nanostructures found in some microorganisms. It is not clear what function gas vesicles perform in soil bacteria. This chain is Gas vesicle protein S, found in Streptomyces sp. (strain CB03234).